The following is a 61-amino-acid chain: Large ribosomal subunit protein bL32 (61 aa).

Positions 1–16 (MAVPKRKTSPSKRGMR) are enriched in basic residues. The tract at residues 1–35 (MAVPKRKTSPSKRGMRRSADGLKSATYVEDKNSGE) is disordered.

This sequence belongs to the bacterial ribosomal protein bL32 family.

The chain is Large ribosomal subunit protein bL32 from Agrobacterium fabrum (strain C58 / ATCC 33970) (Agrobacterium tumefaciens (strain C58)).